Reading from the N-terminus, the 37-residue chain is Large ribosomal subunit protein bL36A (37 aa).

This sequence belongs to the bacterial ribosomal protein bL36 family.

This Methylobacillus flagellatus (strain ATCC 51484 / DSM 6875 / VKM B-1610 / KT) protein is Large ribosomal subunit protein bL36A.